A 445-amino-acid polypeptide reads, in one-letter code: Alpha-1,3-mannosyl-glycoprotein 2-beta-N-acetylglucosaminyltransferase (445 aa).

Over 1–6 (MLKKQS) the chain is Cytoplasmic. A helical; Signal-anchor for type II membrane protein membrane pass occupies residues 7 to 29 (AGLVLWGAILFVAWNALLLLFFW). Residues 30-445 (TRPAPGRPPS…TWEGYDPSWN (416 aa)) are Lumenal-facing. A disulfide bridge links cysteine 113 with cysteine 143. Residues arginine 115, aspartate 142, histidine 188, and aspartate 210 each coordinate substrate. A Mn(2+)-binding site is contributed by aspartate 211. Cysteine 237 and cysteine 303 form a disulfide bridge. Aspartate 289 functions as the Proton acceptor in the catalytic mechanism. Serine 320 provides a ligand contact to substrate.

The protein belongs to the glycosyltransferase 13 family. In terms of assembly, interacts with MGAT4D. Interacts with BRI3 (isoforms 1 and 2); the interaction with isoform 2 is weaker than with isoform 1. Mn(2+) serves as cofactor.

It is found in the golgi apparatus membrane. Its subcellular location is the cytoplasm. The protein localises to the perinuclear region. The enzyme catalyses N(4)-(alpha-D-Man-(1-&gt;3)-[alpha-D-Man-(1-&gt;3)-[alpha-D-Man-(1-&gt;6)]-alpha-D-Man-(1-&gt;6)]-beta-D-Man-(1-&gt;4)-beta-D-GlcNAc-(1-&gt;4)-beta-D-GlcNAc)-L-asparaginyl-[protein] (N-glucan mannose isomer 5A1,2) + UDP-N-acetyl-alpha-D-glucosamine = N(4)-{beta-D-GlcNAc-(1-&gt;2)-alpha-D-Man-(1-&gt;3)-[alpha-D-Man-(1-&gt;3)-[alpha-D-Man-(1-&gt;6)]-alpha-D-Man-(1-&gt;6)]-beta-D-Man-(1-&gt;4)-beta-D-GlcNAc-(1-&gt;4)-beta-D-GlcNAc}-L-asparaginyl-[protein] + UDP + H(+). Its pathway is protein modification; protein glycosylation. In terms of biological role, initiates complex N-linked carbohydrate formation. Essential for the conversion of high-mannose to hybrid and complex N-glycans. In Homo sapiens (Human), this protein is Alpha-1,3-mannosyl-glycoprotein 2-beta-N-acetylglucosaminyltransferase (MGAT1).